Consider the following 308-residue polypeptide: Cap-specific mRNA (nucleoside-2'-O-)-methyltransferase (308 aa).

Tyr30 contributes to the mRNA binding site. Positions 46, 74, 76, 80, 103, 105, 124, and 147 each coordinate S-adenosyl-L-methionine. The interval 177–257 is binding to NPH-I; the sequence is PIASSLKWRC…NTKIRPKIVL (81 aa). Lys183 (for methyltransferase activity) is an active-site residue. MRNA-binding positions include 185–188, Asp190, 213–215, and Glu241; these read RCPF and SAE.

The protein belongs to the class I-like SAM-binding methyltransferase superfamily. Poxvirus/kinetoplastid 2'-O-MTase family. In terms of assembly, interacts with poly(A) polymerase catalytic subunit OPG063. Interacts with OPG109 and OPG123; these interactions might help linking transcription to capping and polyadenylation.

The protein localises to the virion. It catalyses the reaction a 5'-end (N(7)-methyl 5'-triphosphoguanosine)-ribonucleoside in mRNA + S-adenosyl-L-methionine = a 5'-end (N(7)-methyl 5'-triphosphoguanosine)-(2'-O-methyl-ribonucleoside) in mRNA + S-adenosyl-L-homocysteine + H(+). In terms of biological role, displays methyltransferase, positive regulation of the poly(A) polymerase and transcription elongation activities. Involved in the modification of both mRNA ends and in intermediate and late gene positive transcription elongation. At the mRNAs 5' end, methylates the ribose 2' OH group of the first transcribed nucleotide, thereby producing a 2'-O-methylpurine cap. At the 3' end, functions as a processivity factor which stimulates the activity of the viral poly(A) polymerase OPG063 that creates mRNA's poly(A) tail. In the presence of OPG102, OPG063 does not dissociate from the RNA allowing tail elongation to around 250 adenylates. The protein is Cap-specific mRNA (nucleoside-2'-O-)-methyltransferase (OPG102) of Fowlpox virus (strain NVSL) (FPV).